A 217-amino-acid polypeptide reads, in one-letter code: Carboxylesterase Culp1 (217 aa).

Residues 1–32 form the signal peptide; the sequence is MTPRSLVRIVGVVVATTLALVSAPAGGRAAHA. Cys35 and Cys107 are oxidised to a cystine. Ser118 serves as the catalytic Nucleophile. Cys177 and Cys184 form a disulfide bridge. The active site involves Asp181. His193 acts as the Proton donor/acceptor in catalysis.

Belongs to the cutinase family.

The protein resides in the secreted. The catalysed reaction is a fatty acid ester + H2O = an aliphatic alcohol + a fatty acid + H(+). Shows esterase activity, with a preference for short- and medium-chain fatty acids. This is Carboxylesterase Culp1 from Mycobacterium bovis (strain ATCC BAA-935 / AF2122/97).